The chain runs to 194 residues: MNIILASASPRRKEILENTNVRFDIIKNEIDEIILEGETPKHLVMRLAFEKSMSVASEHNEDVVIGADTVVVLDNAILGKPKDESCARDMLKRLSGREHQVITGISLINLCEDKKVIDYVISNVKFKTLSEQDIEDYLKTNESFDKAGAYGIQGYGALLVEEIRGDYFNIVGLPISRLGDLLKKYFSINLFYGV.

Catalysis depends on Asp68, which acts as the Proton acceptor.

This sequence belongs to the Maf family. YhdE subfamily. Requires a divalent metal cation as cofactor.

It is found in the cytoplasm. The catalysed reaction is dTTP + H2O = dTMP + diphosphate + H(+). It carries out the reaction UTP + H2O = UMP + diphosphate + H(+). Nucleoside triphosphate pyrophosphatase that hydrolyzes dTTP and UTP. May have a dual role in cell division arrest and in preventing the incorporation of modified nucleotides into cellular nucleic acids. The polypeptide is dTTP/UTP pyrophosphatase (Clostridioides difficile (strain 630) (Peptoclostridium difficile)).